The following is a 433-amino-acid chain: Serine/threonine-protein phosphatase 2A activator 2 (433 aa).

Residues 1–10 (MTSQAPPQPA) show a composition bias toward pro residues. 2 disordered regions span residues 1–67 (MTSQ…NWTF) and 367–400 (SMSEDTGAGDEADVEDDPHAGHDHTGKAHDGTGW). Over residues 11-23 (SSPGVAAPAAASS) the composition is skewed to low complexity. Positions 45-59 (NPTPIPETPALPTPP) are enriched in pro residues. Acidic residues predominate over residues 367–382 (SMSEDTGAGDEADVED). A compositionally biased stretch (basic and acidic residues) spans 383-396 (DPHAGHDHTGKAHD).

The protein belongs to the PTPA-type PPIase family.

The protein localises to the cytoplasm. It catalyses the reaction [protein]-peptidylproline (omega=180) = [protein]-peptidylproline (omega=0). Its function is as follows. PPIases accelerate the folding of proteins. It catalyzes the cis-trans isomerization of proline imidic peptide bonds in oligopeptides. Acts as a regulatory subunit for PP2A-like phosphatases modulating their activity or substrate specificity, probably by inducing a conformational change in the catalytic subunit, a direct target of the PPIase. Can reactivate inactive phosphatase PP2A-phosphatase methylesterase complexes (PP2Ai) in presence of ATP and Mg(2+) by dissociating the inactive form from the complex. The sequence is that of Serine/threonine-protein phosphatase 2A activator 2 (RRD2) from Gibberella zeae (strain ATCC MYA-4620 / CBS 123657 / FGSC 9075 / NRRL 31084 / PH-1) (Wheat head blight fungus).